The primary structure comprises 255 residues: MRILCTNDDGIHAPGLKTVEQIARAISDDVWVVAPELDQSGVSHSLSLNDPLRLREVGPRHFAVRGTPTDCVIMGSRFILKDKAPDLVLSGVNRGRNVAEDVVYSGTIAGALEGTILGLPSFALSQEFTIETRNAPLWETARTHAPDIIRKVMAAGVPKNTVVNINFPACTPDKVKGVVVTRQGKRNPGFLRIDERHDGRGNPYYWIGFERIKVEDMPAEGTDLAALAANFVSVTPLKLDRTDETFSAALANTLA.

A divalent metal cation is bound by residues Asp8, Asp9, Ser40, and Asn93.

The protein belongs to the SurE nucleotidase family. It depends on a divalent metal cation as a cofactor.

The protein resides in the cytoplasm. The enzyme catalyses a ribonucleoside 5'-phosphate + H2O = a ribonucleoside + phosphate. Functionally, nucleotidase that shows phosphatase activity on nucleoside 5'-monophosphates. The polypeptide is 5'-nucleotidase SurE (Rhodopseudomonas palustris (strain ATCC BAA-98 / CGA009)).